The chain runs to 307 residues: Mitochondrial glycine transporter (307 aa).

3 Solcar repeats span residues 8 to 87 (PRNS…MRSS), 115 to 199 (LTMY…SKQL), and 221 to 305 (TSTT…LVKR). The next 6 helical transmembrane spans lie at 14–39 (LIGG…TRIQ), 62–88 (GTLP…RSSL), 121–146 (LLTG…VRYE), 174–197 (GFGA…EKSK), 225–251 (VNTT…KTRM), and 280–298 (GLSM…AWGI).

It belongs to the mitochondrial carrier (TC 2.A.29) family. SLC25A38 subfamily.

The protein resides in the mitochondrion. It localises to the mitochondrion inner membrane. It carries out the reaction glycine(in) = glycine(out). Its function is as follows. Mitochondrial glycine transporter that imports glycine into the mitochondrial matrix. Plays an important role in providing glycine for the first enzymatic step in heme biosynthesis, the condensation of glycine with succinyl-CoA to produce 5-aminolevulinate (ALA) in the mitochondrial matrix. This chain is Mitochondrial glycine transporter, found in Saccharomyces cerevisiae (strain ATCC 204508 / S288c) (Baker's yeast).